Here is a 141-residue protein sequence, read N- to C-terminus: Cholinesterase (141 aa).

The N-linked (GlcNAc...) asparagine glycan is linked to Asn39. 49 to 50 (GS) is a binding site for substrate. Ser131 serves as the catalytic Acyl-ester intermediate. The residue at position 131 (Ser131) is a Phosphoserine.

This sequence belongs to the type-B carboxylesterase/lipase family. Homotetramer; disulfide-linked. Dimer of dimers. Present in most cells except erythrocytes.

It is found in the secreted. The catalysed reaction is an acylcholine + H2O = a carboxylate + choline + H(+). In terms of biological role, esterase with broad substrate specificity. Contributes to the inactivation of the neurotransmitter acetylcholine. Can degrade neurotoxic organophosphate esters. The protein is Cholinesterase (BCHE) of Ovis aries (Sheep).